The primary structure comprises 354 residues: Protein RecA (354 aa).

67–74 (GPESSGKT) is an ATP binding site.

It belongs to the RecA family.

The protein localises to the cytoplasm. Can catalyze the hydrolysis of ATP in the presence of single-stranded DNA, the ATP-dependent uptake of single-stranded DNA by duplex DNA, and the ATP-dependent hybridization of homologous single-stranded DNAs. It interacts with LexA causing its activation and leading to its autocatalytic cleavage. This is Protein RecA from Hamiltonella defensa subsp. Acyrthosiphon pisum (strain 5AT).